The primary structure comprises 432 residues: Enolase (432 aa).

Glutamine 167 contributes to the (2R)-2-phosphoglycerate binding site. Glutamate 209 serves as the catalytic Proton donor. The Mg(2+) site is built by aspartate 246, glutamate 291, and aspartate 318. The (2R)-2-phosphoglycerate site is built by lysine 343, arginine 372, serine 373, and lysine 394. Lysine 343 serves as the catalytic Proton acceptor.

The protein belongs to the enolase family. Component of the RNA degradosome, a multiprotein complex involved in RNA processing and mRNA degradation. Mg(2+) serves as cofactor.

Its subcellular location is the cytoplasm. It is found in the secreted. It localises to the cell surface. It carries out the reaction (2R)-2-phosphoglycerate = phosphoenolpyruvate + H2O. The protein operates within carbohydrate degradation; glycolysis; pyruvate from D-glyceraldehyde 3-phosphate: step 4/5. Its function is as follows. Catalyzes the reversible conversion of 2-phosphoglycerate (2-PG) into phosphoenolpyruvate (PEP). It is essential for the degradation of carbohydrates via glycolysis. The protein is Enolase of Aliivibrio fischeri (strain ATCC 700601 / ES114) (Vibrio fischeri).